The primary structure comprises 353 residues: MSQKRNLPSWMSSRDPEITPSKSHCKKPKDEGPTEEHNSRNAPSNKSEHAEPSSNTTEFSKLMEGVVFVLSGFVNPERSTLRSQALTMGATYQPDWNAGSTLLICAFPNTPKFRQVETNGGTIISKEWITECYAQKKLVDIEQYLMHAGKPWRKSSSPQDANREKREHLSKKPEKQVEKKTETRGTPSTSSKNRSACNLVKEPFFVTEVKKWARDDLSQTISWLESQEEKPEPGEIKRIAAEGVLTCLQDAIDSLEQKQDIGSVTELWSFVPRVVKELGKMESSSKKENSTASKEEVCKQAKSWKKIYEAELAKPGEDESTSRVACGYDSDMTVEMTEEEIELAYRNVSLECL.

Positions 1-12 (MSQKRNLPSWMS) are enriched in polar residues. Residues 1–57 (MSQKRNLPSWMSSRDPEITPSKSHCKKPKDEGPTEEHNSRNAPSNKSEHAEPSSNTT) are disordered. Residues 28-39 (PKDEGPTEEHNS) are compositionally biased toward basic and acidic residues. One can recognise a BRCT 1 domain in the interval 58 to 146 (EFSKLMEGVV…KLVDIEQYLM (89 aa)). A disordered region spans residues 150–194 (KPWRKSSSPQDANREKREHLSKKPEKQVEKKTETRGTPSTSSKNR). Over residues 161–183 (ANREKREHLSKKPEKQVEKKTET) the composition is skewed to basic and acidic residues. Polar residues predominate over residues 184-194 (RGTPSTSSKNR). A coiled-coil region spans residues 240–260 (AAEGVLTCLQDAIDSLEQKQD). A BRCT 2 domain is found at 266 to 347 (ELWSFVPRVV…EEEIELAYRN (82 aa)).

Homodimer. Interacts with polynucleotide kinase (PNK), DNA polymerase-beta (POLB) and DNA ligase III (LIG3). Interacts with ZDP and ROS1. Binds to various forms of double-stranded DNA (e.g. methylated, unmethylated, with single-nucleotide gap flanked by 3'-phosphate or 5'-phosphate ends).

It localises to the nucleus. Its function is as follows. Corrects defective DNA strand-break repair and sister chromatid exchange following treatment with ionizing radiation and alkylating agents. Involved in DNA demethylation pathway by stimulating cytosine methylation (5-meC) excision, gap tailoring, and DNA ligation. The polypeptide is DNA-repair protein XRCC1 (Arabidopsis thaliana (Mouse-ear cress)).